The primary structure comprises 437 residues: tRNA-2-methylthio-N(6)-dimethylallyladenosine synthase (437 aa).

One can recognise an MTTase N-terminal domain in the interval 1 to 115 (MKVYIETMGC…ISQVIHKEKA (115 aa)). Positions 10, 46, 78, 148, 152, and 155 each coordinate [4Fe-4S] cluster. Residues 134–367 (KKAQIRSLLN…QNRHKEILEE (234 aa)) enclose the Radical SAM core domain. In terms of domain architecture, TRAM spans 370–436 (KLEVGKTHVV…KGRLMATTKG (67 aa)).

This sequence belongs to the methylthiotransferase family. MiaB subfamily. Monomer. The cofactor is [4Fe-4S] cluster.

It localises to the cytoplasm. It carries out the reaction N(6)-dimethylallyladenosine(37) in tRNA + (sulfur carrier)-SH + AH2 + 2 S-adenosyl-L-methionine = 2-methylsulfanyl-N(6)-dimethylallyladenosine(37) in tRNA + (sulfur carrier)-H + 5'-deoxyadenosine + L-methionine + A + S-adenosyl-L-homocysteine + 2 H(+). Functionally, catalyzes the methylthiolation of N6-(dimethylallyl)adenosine (i(6)A), leading to the formation of 2-methylthio-N6-(dimethylallyl)adenosine (ms(2)i(6)A) at position 37 in tRNAs that read codons beginning with uridine. This chain is tRNA-2-methylthio-N(6)-dimethylallyladenosine synthase, found in Helicobacter pylori (strain G27).